The sequence spans 553 residues: Phenylalanine--tRNA ligase beta subunit (553 aa).

Residues 273–349 (FNVRNIDIEV…RAFGYNNITP (77 aa)) form the B5 domain. Mg(2+)-binding residues include Asp-327, Asp-333, Asp-336, and Asp-337.

Belongs to the phenylalanyl-tRNA synthetase beta subunit family. Type 2 subfamily. In terms of assembly, tetramer of two alpha and two beta subunits. It depends on Mg(2+) as a cofactor.

It localises to the cytoplasm. The catalysed reaction is tRNA(Phe) + L-phenylalanine + ATP = L-phenylalanyl-tRNA(Phe) + AMP + diphosphate + H(+). This is Phenylalanine--tRNA ligase beta subunit from Methanocella arvoryzae (strain DSM 22066 / NBRC 105507 / MRE50).